The chain runs to 381 residues: Chaperone protein DnaJ (381 aa).

Residues 5–70 (DFYEVLGVSR…QKKAAYDQYG (66 aa)) form the J domain. The CR-type zinc finger occupies 136–214 (GVSKEIEVPT…CHGQGRKQKT (79 aa)). Zn(2+) is bound by residues Cys149, Cys152, Cys166, Cys169, Cys188, Cys191, Cys202, and Cys205. 4 CXXCXGXG motif repeats span residues 149–156 (CDTCEGTG), 166–173 (CGTCHGHG), 188–195 (CPTCHGKG), and 202–209 (CNVCHGQG).

The protein belongs to the DnaJ family. As to quaternary structure, homodimer. Zn(2+) is required as a cofactor.

The protein resides in the cytoplasm. Functionally, participates actively in the response to hyperosmotic and heat shock by preventing the aggregation of stress-denatured proteins and by disaggregating proteins, also in an autonomous, DnaK-independent fashion. Unfolded proteins bind initially to DnaJ; upon interaction with the DnaJ-bound protein, DnaK hydrolyzes its bound ATP, resulting in the formation of a stable complex. GrpE releases ADP from DnaK; ATP binding to DnaK triggers the release of the substrate protein, thus completing the reaction cycle. Several rounds of ATP-dependent interactions between DnaJ, DnaK and GrpE are required for fully efficient folding. Also involved, together with DnaK and GrpE, in the DNA replication of plasmids through activation of initiation proteins. The protein is Chaperone protein DnaJ of Vibrio vulnificus (strain CMCP6).